The primary structure comprises 527 residues: N-acetylglutamate synthase, mitochondrial (527 aa).

The transit peptide at 1 to 39 directs the protein to the mitochondrion; that stretch reads MAKVNSGSSGCRAMVMAGQFWTKPFALSSQRSGPHRRSA. The disordered stretch occupies residues 28-65; that stretch reads SSQRSGPHRRSAAEVNRRMSSSRTAGHGSKTPLWSQQE. The interval 40–83 is may stabilize the oligomeric structure; the sequence is AEVNRRMSSSRTAGHGSKTPLWSQQESYNHSSLGERSAWSNRTL. The tract at residues 40-361 is amino-acid kinase domain (AAK); sequence AEVNRRMSSS…SGTLFKNGDP (322 aa). Positions 360 to 511 constitute an N-acetyltransferase domain; it reads DPIRRYSSLE…FAKSHPDSFC (152 aa). Residues lysine 386, lysine 429, and 459–464 each bind substrate; that span reads RSRTTN.

This sequence belongs to the acetyltransferase family. Homodimer. Homotetramer.

It is found in the mitochondrion matrix. It catalyses the reaction L-glutamate + acetyl-CoA = N-acetyl-L-glutamate + CoA + H(+). Its activity is regulated as follows. Inhibited by L-arginine. In terms of biological role, plays a role in the regulation of ureagenesis by producing the essential cofactor N-acetylglutamate (NAG), thus modulating carbamoylphosphate synthase I (cps1) activity. This Danio rerio (Zebrafish) protein is N-acetylglutamate synthase, mitochondrial.